The chain runs to 590 residues: Potassium-transporting ATPase potassium-binding subunit (590 aa).

4 consecutive transmembrane segments (helical) span residues 3–23 (AFLL…RPLG), 63–83 (HYAL…YALQ), 134–154 (GLAV…IALI), and 177–197 (LYVL…QGAI). The tract at residues 217–244 (PKTDAQGNPIKDAQGNPVTEKATTQKQT) is disordered. The next 8 helical transmembrane spans lie at 284 to 304 (FVQM…FGAM), 312 to 332 (WAVL…EMWA), 359 to 379 (FGVV…CGAV), 388 to 408 (ALGG…FGGV), 411 to 431 (GLYG…LMIG), 450 to 470 (SIAI…AVLA), 515 to 535 (VALG…VLAM), and 558 to 578 (LFVV…YIPA).

This sequence belongs to the KdpA family. As to quaternary structure, the system is composed of three essential subunits: KdpA, KdpB and KdpC.

It is found in the cell inner membrane. In terms of biological role, part of the high-affinity ATP-driven potassium transport (or Kdp) system, which catalyzes the hydrolysis of ATP coupled with the electrogenic transport of potassium into the cytoplasm. This subunit binds the periplasmic potassium ions and delivers the ions to the membrane domain of KdpB through an intramembrane tunnel. The protein is Potassium-transporting ATPase potassium-binding subunit of Ralstonia nicotianae (strain ATCC BAA-1114 / GMI1000) (Ralstonia solanacearum).